Here is a 563-residue protein sequence, read N- to C-terminus: Proton channel OTOP2 (563 aa).

The disordered stretch occupies residues 1–20 (MSEELVPHPNESLPGPRASP). Helical transmembrane passes span 30-50 (LLSV…ISGG), 62-82 (VFAL…FYLL), 100-120 (PIWL…MDVF), 137-157 (ILHP…LWIS), 173-193 (LMFT…DESV), 242-262 (FYLY…LYVM), 290-310 (FFAG…VFIL), 325-345 (ALVI…LVSL), 373-393 (LMGA…AVVV), 403-423 (LNLS…VFII), 496-516 (DISL…AFGA), and 528-548 (FYGY…GIFY).

It belongs to the otopetrin family. As to expression, expressed at higher level in stomach, testis and olfactory bulb.

It localises to the cell membrane. It catalyses the reaction H(+)(in) = H(+)(out). With respect to regulation, actives at neutral and alkaline extracellular pH, acid extracellular pH appears to inhibit the channel. Insensitive to activation by Zn(2+). Proton-selective ion channel open at neutral pH. Actives at neutral and alkaline extracellular pH, likely participates in some alkali-related physiological activities. This chain is Proton channel OTOP2, found in Mus musculus (Mouse).